Here is a 966-residue protein sequence, read N- to C-terminus: MIINTIDKIYNPKNIEESIYNFWEKSNYFEPDIINNYKKNYCIMMPPPNITGGLHLGHAFQQTIMDILVRYQRMNGKNVLWASGLDHAGIATQILIEKNFYNKKNSIKDNHDPHSLIKEVWLWKEKSEKFINYQIKRLGHSVSWKNKHFTMDPEISLAVKEAFIQLYTNNLIYKGKQLVNWDSKLQTAISDLEVSHKQKSDFIWYIQYQLEYNTSHINNQKKNADYLTIATTRPETILGDVAIAVNPEDPRYSHLIGKYVFTPITNRRIPIISDKFVNINKGTGCVKITPAHDFNDYIIGKKYKLPMINIFSTYKTILTIPEISNNQGQPYIQSNDQYHIPKMFHNLDYKDARKKIIEECKRLKILEDIKTHQLTVPINNRTGTIIEPMLTDQWFIKTKFLAKQAINAVTNEKIKFIPKNYTNIYLQWMNEIQDWCISRQIWWGHRIPVWYDNNNTIYVGHCEKDIRIKNQLNKDIQLSQDNNVLDTWFSSSLWTFSSLGWPKNNTLLKMFHPTNIIISGFDIIFFWIARMIMMTMYLVKDQNNNAQIPFKKIYITGLMRDKFGQKMSKSKGNGIDPIDIIDGISKKKLLKKQLKENSQSKSISSIIKYINTQFPNGIKPYGADTLRLTLTALASSGQDIHWDMHKLESYHNFCNKLWNVSKFVITHTDNYHYDIDTKNKKIFSLSDRWITSKLHQTIQKFSQALNDYRFDHTVNILYEFIWHQFCDWYIEFTKPILYHSTNTLQLISTRYTLITSLESILRLSHPIIPFITEKIWQKIHSIVTTNNKHTIMLQSFPKYDSNYIDLESISDIEWIQNLIAEIRMIRTYTGISYKIPLDIGFYNTSNHIKECISENYHILTKILQLQTINFLEKNDISNNRYFKIPIKESELIIFIPNIFDKKTAIHKFNKEIKLINYKIHLLEQKMNNTNYSLNLQHSFKKSQEKLNHYNKTKNKLLNQYFIVKNL.

A 'HIGH' region motif is present at residues 48–58 (PNITGGLHLGH). Residues 348–368 (DYKDARKKIIEECKRLKILED) adopt a coiled-coil conformation. The 'KMSKS' region motif lies at 566–570 (KMSKS). Residue lysine 569 coordinates ATP. A coiled-coil region spans residues 939-960 (FKKSQEKLNHYNKTKNKLLNQY).

It belongs to the class-I aminoacyl-tRNA synthetase family. ValS type 1 subfamily. Monomer.

It localises to the cytoplasm. The catalysed reaction is tRNA(Val) + L-valine + ATP = L-valyl-tRNA(Val) + AMP + diphosphate. Its function is as follows. Catalyzes the attachment of valine to tRNA(Val). As ValRS can inadvertently accommodate and process structurally similar amino acids such as threonine, to avoid such errors, it has a 'posttransfer' editing activity that hydrolyzes mischarged Thr-tRNA(Val) in a tRNA-dependent manner. This is Valine--tRNA ligase from Blochmanniella floridana.